We begin with the raw amino-acid sequence, 391 residues long: MAMISLQAMRKAQRAQGPATILAVGTANPPNLYEQDTYPDYYFRVTNSEHKQELKNKFRLMCEKTMVKRRYLYLTPEILKERPKLCSYMEPSFDDRQDIVVEEVPKLAAEAAENAIKEWGGDKSAITHLVFCSISGIDMPGADYRLAQLLGLPLAVNRLMLYSQACHMGAAMLRIAKDIAENNRSARVLVVACEITVLSFRGPDERDFQALAGQAGFGDGAGAMIVGADPVLGVERPLYHIMSATQTTVPESEKAVGGHLREVGLTFHFFNQLPAIIADNVGNSLAEAFEPIGIKDWNNIFWVAHPGNWAIMDAIETKLGLEQSKLATARHVFSEFGNMQSATVYFVMDELRKRSAAENRATTGDGLRWGVLFGFGPGISIETVVLQSVPL.

Cys166 is an active-site residue.

This sequence belongs to the thiolase-like superfamily. Chalcone/stilbene synthases family. Homodimer.

It catalyses the reaction (E)-feruloylacetyl-CoA + (E)-feruloyl-CoA + H2O = curcumin + CO2 + 2 CoA. Its pathway is secondary metabolite biosynthesis; flavonoid biosynthesis. Its function is as follows. Catalyzes the synthesis of curcumin by condensing feruloyl-CoA with a diketide-CoA in the curcuminoid biosynthesis. The protein is Curcumin synthase 2 (CURS2) of Curcuma longa (Turmeric).